The sequence spans 361 residues: Phosphate acyltransferase (361 aa).

Belongs to the PlsX family. In terms of assembly, homodimer. Probably interacts with PlsY.

The protein resides in the cytoplasm. It catalyses the reaction a fatty acyl-[ACP] + phosphate = an acyl phosphate + holo-[ACP]. Its pathway is lipid metabolism; phospholipid metabolism. Catalyzes the reversible formation of acyl-phosphate (acyl-PO(4)) from acyl-[acyl-carrier-protein] (acyl-ACP). This enzyme utilizes acyl-ACP as fatty acyl donor, but not acyl-CoA. The chain is Phosphate acyltransferase from Parvibaculum lavamentivorans (strain DS-1 / DSM 13023 / NCIMB 13966).